The primary structure comprises 278 residues: Chitosanase (278 aa).

Positions 1–40 are cleaved as a signal peptide; sequence MHSQHRTARIALAVVLTAIPASLATAGVGYASTQASTAVK. Catalysis depends on Glu-62, which acts as the Proton donor. Asp-80 serves as the catalytic Nucleophile.

Belongs to the glycosyl hydrolase 46 family.

It localises to the secreted. It carries out the reaction Endohydrolysis of beta-(1-&gt;4)-linkages between D-glucosamine residues in a partly acetylated chitosan.. In terms of biological role, aids in the defense against invading fungal pathogens by degrading their cell wall chitosan. In Streptomyces sp. (strain N174), this protein is Chitosanase (csn).